The primary structure comprises 336 residues: Plant-specific TFIIB-related protein 2 (336 aa).

The segment at 2–34 (EEETCLDCKRPTIMVVDHSSGDTICSECGLVLE) adopts a TFIIB-type zinc-finger fold. Positions 6, 9, 26, and 29 each coordinate Zn(2+).

As to expression, specifically expressed in reproductive organs and seeds.

The protein localises to the nucleus. In terms of biological role, plant-specific TFIIB-related protein involved in the regulation of endosperm proliferation during the syncytial phase of endosperm development. Does not contribute to RNA polymerase IV or V activities in reproductive tissues. The chain is Plant-specific TFIIB-related protein 2 from Arabidopsis thaliana (Mouse-ear cress).